The chain runs to 170 residues: 4-hydroxyphenylacetate 3-monooxygenase reductase component (170 aa).

This sequence belongs to the non-flavoprotein flavin reductase family. HpaC subfamily. In terms of assembly, homodimer. 4-HPA 3-monooxygenase consists of a reductase component HpaC and an oxygenase component HpaB.

The enzyme catalyses a reduced flavin + NAD(+) = an oxidized flavin + NADH + 2 H(+). The protein operates within aromatic compound metabolism; 4-hydroxyphenylacetate degradation; pyruvate and succinate semialdehyde from 4-hydroxyphenylacetate: step 1/7. Catalyzes the reduction of free flavins (FMN, FAD and riboflavin) by NADH. Subsequently, the reduced flavins diffuse to the large HpaB component or to other electron acceptors such as cytochrome c and Fe(3+) ion. The chain is 4-hydroxyphenylacetate 3-monooxygenase reductase component (hpaC) from Escherichia coli.